A 222-amino-acid polypeptide reads, in one-letter code: UPF0502 protein XCC4136 (222 aa).

The protein belongs to the UPF0502 family.

The chain is UPF0502 protein XCC4136 from Xanthomonas campestris pv. campestris (strain ATCC 33913 / DSM 3586 / NCPPB 528 / LMG 568 / P 25).